A 201-amino-acid chain; its full sequence is MICOS complex subunit MIC27 (201 aa).

The N-terminal 31 residues, 1-31 (MTQDKPIVETISNAGEQVTNVFGQFWQLVTS), are a transit peptide targeting the mitochondrion. At 32–117 (KNTTNNGDSK…KCNAYLTEEW (86 aa)) the chain is on the cytoplasmic side. The chain crosses the membrane as a helical span at residues 118 to 138 (TALPKAAAITVGGMAGFVLGL). Over 139 to 145 (KRGPVGR) the chain is Mitochondrial intermembrane. The helical transmembrane segment at 146–166 (LLTTTIGLATMAAFCYPIEAV) threads the bilayer. Residues 167–201 (DVAKTGRAHAEQTWYSFQESPTPSAIVKTNLSPPK) are Cytoplasmic-facing.

It belongs to the apolipoprotein O/MICOS complex subunit Mic27 family. Component of the mitochondrial contact site and cristae organizing system (MICOS) complex.

Its subcellular location is the mitochondrion outer membrane. Sustains mitochondrial morphology probably through maintaining cristae morphology. May act as a component of the MICOS complex, a large protein complex of the mitochondria. In Caenorhabditis elegans, this protein is MICOS complex subunit MIC27.